Here is a 491-residue protein sequence, read N- to C-terminus: Immediate early protein IE1 (491 aa).

Over residues 1-11 (MESSAKRKMDP) the composition is skewed to basic and acidic residues. The nuclear localization signal stretch occupies residues 1 to 24 (MESSAKRKMDPDNPDEGPSSKVPR). The disordered stretch occupies residues 1–30 (MESSAKRKMDPDNPDEGPSSKVPRPETPVT). Residues 132–346 (ILDKVHEPFE…SVMKRRIEEI (215 aa)) form an interaction with host PML, interference with PML sumoylation and disruption of PML-associated nuclear bodies region. The tract at residues 373 to 445 (AIAEESDEEE…EEGAQEERED (73 aa)) is interaction with host STAT2. Residues 410–420 (ATIPLSSVIVA) form a modulation of STAT3/STAT1 signaling region. An interaction with host STAT3 region spans residues 410–445 (ATIPLSSVIVAENSDQEESEQSDEEQEEGAQEERED). The segment at 421–472 (ENSDQEESEQSDEEQEEGAQEEREDTVSVKSEPVSEIEEVASEEEEDGAEEP) is acidic. The interval 421-491 (ENSDQEESEQ…PMVTRSKADQ (71 aa)) is disordered. Positions 423–444 (SDQEESEQSDEEQEEGAQEERE) are enriched in acidic residues. Residues 449 to 452 (VKSE) are interaction with host SUMO1. Residue Lys-450 forms a Glycyl lysine isopeptide (Lys-Gly) (interchain with G-Cter in SUMO) linkage. Over residues 455 to 470 (SEIEEVASEEEEDGAE) the composition is skewed to acidic residues. The chromosome-tethering domain (CTD), binding to histones stretch occupies residues 475–491 (SGGKSTHPMVTRSKADQ).

This sequence belongs to the HHV-5 IE1 protein family. As to quaternary structure, forms homodimers. Interacts with human p53/TP53; this interaction inhibits p53/TP53-dependent transactivation activity. Interacts with host STAT1. Interacts with host STAT2; this interaction promotes viral growth and counteracts the antiviral interferon response. May also interact with the host STAT1-STAT2 heterodimer. Interacts with host STAT3; this interaction leads to STAT3 nuclear accumulation and disruption of IL6-induced STAT3 phosphorylation. Interacts with host PML; this interaction probably inhibits PML regulation of type I and type II interferon-induced gene expression. Interacts with host DAXX. Interacts with host SP100. Interacts with host E2F1. Interacts with host RB1. Interacts with host HDAC1; this interaction inhibits histone deacetylation and promotes viral transcription. Interacts with host HDAC2; this interaction inhibits histone deacetylation and promotes viral transcription. Interacts with host HDAC3; this interaction inhibits histone deacetylation and promotes viral transcription. Interacts with host PLSCR1; this interaction inhibits IE1 transactivating activity. In terms of processing, sumoylated by host PML/nuclear domain 10. Sumoylation abolishes the interaction with host STAT2 and thus the IE1-mediated repression of interferon-stimulated genes.

It is found in the host nucleus. Its function is as follows. Plays an important role in transactivating viral early genes as well as activating its own promoter, probably by altering the viral chromatin structure. Expression of IE1 and IE2 proteins is critical for the establishment of lytic infection and reactivation from viral latency. Disrupts PML-associated ND10 nuclear bodies by interfering with host PML and SP100 sumoylation thereby altering the regulation of type I and type II interferon-induced gene expression. Promotes efficient viral growth by interacting with and directing host SP100 to degradation, leading to enhanced acetylation level of histones. In addition, functions in counteracting the host innate antiviral response. Inhibits the type I interferon pathway by directly interacting with and sequestrating host STAT2. Also targets type II interferon pathway by repressing IL6- and STAT3 target genes. Repression of STAT3 genes is due to STAT3 nuclear accumulation and disruption of IL6-induced STAT3 phosphorylation by IE1. This repression is followed by phosphorylation and activation of STAT1. Inhibits host ISG transcription by sequestering host ISGF3 in a PML- and STAT2- binding dependent manner. Alters host cell cycle progression, probably through its interaction with host E2F1 or RB1 that overcomes the RB1-mediated repression of E2F-responsive promoters. The chain is Immediate early protein IE1 (UL123) from Human cytomegalovirus (strain Merlin) (HHV-5).